The primary structure comprises 474 residues: Glutamate--tRNA ligase (474 aa).

Positions 9 to 19 (PSPTGYLHVGG) match the 'HIGH' region motif. The 'KMSKS' region motif lies at 240–244 (KLSKR). Position 243 (K243) interacts with ATP.

The protein belongs to the class-I aminoacyl-tRNA synthetase family. Glutamate--tRNA ligase type 1 subfamily. In terms of assembly, monomer.

Its subcellular location is the cytoplasm. It catalyses the reaction tRNA(Glu) + L-glutamate + ATP = L-glutamyl-tRNA(Glu) + AMP + diphosphate. Its function is as follows. Catalyzes the attachment of glutamate to tRNA(Glu) in a two-step reaction: glutamate is first activated by ATP to form Glu-AMP and then transferred to the acceptor end of tRNA(Glu). The polypeptide is Glutamate--tRNA ligase (Aliivibrio fischeri (strain MJ11) (Vibrio fischeri)).